A 294-amino-acid chain; its full sequence is Retinoic acid receptor responder protein 1 (294 aa).

Residues 1–20 (MQPRRQRLPAPWSGPRGPRP) lie on the Lumenal side of the membrane. A helical; Signal-anchor for type III membrane protein membrane pass occupies residues 21–42 (TAPLLALLLLLAPVAAPAGSGD). 2 Cystatin LXN-type domains span residues 38–153 (AGSG…EKKK) and 173–276 (EIVS…TPEE). O-linked (Xyl...) (chondroitin sulfate) serine glycosylation occurs at serine 40. Over 43–294 (PDDPGQPQDA…AVVPTELSNF (252 aa)) the chain is Cytoplasmic. The tract at residues 273–294 (TPEEASGTEEGSAVVPTELSNF) is disordered.

The protein belongs to the protease inhibitor I47 (latexin) family. Interacts with AGBL2, KIF11 and MAPRE1. In terms of processing, not N-glycosylated. O-glycosylated; contains chondroitin sulfate. As to expression, detected in urine (at protein level).

The protein resides in the membrane. Its subcellular location is the secreted. In terms of biological role, inhibitor of the cytoplasmic carboxypeptidase AGBL2, may regulate the alpha-tubulin tyrosination cycle. This chain is Retinoic acid receptor responder protein 1 (RARRES1), found in Homo sapiens (Human).